Here is a 190-residue protein sequence, read N- to C-terminus: Potassium-transporting ATPase KdpC subunit (190 aa).

A helical transmembrane segment spans residues 10–30 (TFLFLLLITGGVYPLLTTALG).

This sequence belongs to the KdpC family. The system is composed of three essential subunits: KdpA, KdpB and KdpC.

The protein resides in the cell inner membrane. Functionally, part of the high-affinity ATP-driven potassium transport (or Kdp) system, which catalyzes the hydrolysis of ATP coupled with the electrogenic transport of potassium into the cytoplasm. This subunit acts as a catalytic chaperone that increases the ATP-binding affinity of the ATP-hydrolyzing subunit KdpB by the formation of a transient KdpB/KdpC/ATP ternary complex. The protein is Potassium-transporting ATPase KdpC subunit of Escherichia fergusonii (strain ATCC 35469 / DSM 13698 / CCUG 18766 / IAM 14443 / JCM 21226 / LMG 7866 / NBRC 102419 / NCTC 12128 / CDC 0568-73).